The chain runs to 117 residues: Probable non-functional immunoglobulin kappa variable 1D-42 (117 aa).

The signal sequence occupies residues 1–22 (MDMRVPAQLLGLLLLWLPGVRF). The tract at residues 23–45 (DIQMTQSPSFLSASVGDRVSIIC) is framework-1. An Ig-like domain is found at 23–117 (DIQMTQSPSF…YYCKQDFSYP (95 aa)). A disulfide bridge connects residues cysteine 45 and cysteine 110. Residues 46–56 (WASEGISSNLA) form a complementarity-determining-1 region. A framework-2 region spans residues 57–71 (WYLQKPGKSPKLFLY). The tract at residues 72–78 (DAKDLHP) is complementarity-determining-2. Residues 79 to 110 (GVSSRFSGRGSGTDFTLTIISLKPEDFAAYYC) form a framework-3 region. The interval 111–117 (KQDFSYP) is complementarity-determining-3.

Immunoglobulins are composed of two identical heavy chains and two identical light chains; disulfide-linked.

It localises to the secreted. The protein localises to the cell membrane. Probable non-functional open reading frame (ORF) of V region of the variable domain of immunoglobulin light chains. Non-functional ORF generally cannot participate in the synthesis of a productive immunoglobulin chain due to altered V-(D)-J or switch recombination and/or splicing site (at mRNA level) and/or conserved amino acid change (protein level). Immunoglobulins, also known as antibodies, are membrane-bound or secreted glycoproteins produced by B lymphocytes. In the recognition phase of humoral immunity, the membrane-bound immunoglobulins serve as receptors which, upon binding of a specific antigen, trigger the clonal expansion and differentiation of B lymphocytes into immunoglobulins-secreting plasma cells. Secreted immunoglobulins mediate the effector phase of humoral immunity, which results in the elimination of bound antigens. The antigen binding site is formed by the variable domain of one heavy chain, together with that of its associated light chain. Thus, each immunoglobulin has two antigen binding sites with remarkable affinity for a particular antigen. The variable domains are assembled by a process called V-(D)-J rearrangement and can then be subjected to somatic hypermutations which, after exposure to antigen and selection, allow affinity maturation for a particular antigen. The chain is Probable non-functional immunoglobulin kappa variable 1D-42 from Homo sapiens (Human).